A 225-amino-acid polypeptide reads, in one-letter code: PKHD-type hydroxylase YbiX (225 aa).

In terms of domain architecture, Fe2OG dioxygenase spans 78-177 (TLSTPLFNRY…RVASFMWIQS (100 aa)). The Fe cation site is built by H96, D98, and H158. Position 168 (R168) interacts with 2-oxoglutarate.

Fe(2+) serves as cofactor. It depends on L-ascorbate as a cofactor.

The polypeptide is PKHD-type hydroxylase YbiX (Escherichia coli O7:K1 (strain IAI39 / ExPEC)).